Consider the following 218-residue polypeptide: UPF0319 protein swp_2242 (218 aa).

Residues 1 to 21 (MRLSQSVLTALLICVNSAAFA) form the signal peptide.

Belongs to the UPF0319 family.

The sequence is that of UPF0319 protein swp_2242 from Shewanella piezotolerans (strain WP3 / JCM 13877).